The following is a 332-amino-acid chain: Autoinducer 2 import system permease protein LsrD (332 aa).

10 helical membrane passes run 7 to 27, 45 to 65, 70 to 90, 91 to 111, 118 to 138, 162 to 182, 216 to 236, 240 to 260, 261 to 281, and 288 to 308; these read YSWE…FGLI, ICIG…GMDI, TIGL…PLPL, AIII…GLII, LVIT…LSGM, FLGI…FWLL, VYAM…SYFG, SDLG…GGAN, IYGG…VGFL, and AGVP…VVVV.

It belongs to the binding-protein-dependent transport system permease family. AraH/RbsC subfamily. The complex is composed of two ATP-binding proteins (LsrA), two transmembrane proteins (LsrC and LsrD) and a solute-binding protein (LsrB).

It is found in the cell inner membrane. Its function is as follows. Part of the ABC transporter complex LsrABCD involved in autoinducer 2 (AI-2) import. Probably responsible for the translocation of the substrate across the membrane. The protein is Autoinducer 2 import system permease protein LsrD (lsrD) of Salmonella paratyphi B (strain ATCC BAA-1250 / SPB7).